The following is a 471-amino-acid chain: Pneumolysin (471 aa).

Transmembrane regions (beta stranded) follow at residues 158-171 (MEQL…DFEK), 178-187 (IDFNSVHSGE), 256-265 (SDEVEAAFEA), and 273-285 (APQT…LDNT). Positions 427–437 (ECTGLAWEWWR) match the Conserved undecapeptide motif. A Cholesterol binding motif is present at residues 459–460 (TL).

This sequence belongs to the cholesterol-dependent cytolysin family. In terms of assembly, homooligomeric pore complex of 35 to 50 subunits; when inserted in the host membrane. Has a slightly altered apparent molecular weight in a secA2 deletion mutant, but no post-translational modifications have been found.

It is found in the secreted. It localises to the cell wall. Its subcellular location is the host cell membrane. Functionally, a cholesterol-dependent toxin that causes cytolysis by forming pores in cholesterol containing host membranes. After binding to target membranes, the protein undergoes a major conformation change, leading to its insertion in the host membrane and formation of an oligomeric pore complex. Cholesterol is required for binding to host membranes, membrane insertion and pore formation; cholesterol binding is mediated by a Thr-Leu pair in the C-terminus. Can be reversibly inactivated by oxidation. The polypeptide is Pneumolysin (ply) (Streptococcus pneumoniae serotype 4 (strain ATCC BAA-334 / TIGR4)).